We begin with the raw amino-acid sequence, 378 residues long: Metalloendoproteinase 2-MMP (378 aa).

Positions 1–20 (MRFCVFGFLSLFLIVSPASA) are cleaved as a signal peptide. Positions 21 to 154 (WFFPNSTAVP…SRTHLHAVKR (134 aa)) are cleaved as a propeptide — activation peptide. N-linked (GlcNAc...) asparagine glycosylation is found at asparagine 25, asparagine 35, asparagine 46, asparagine 79, and asparagine 102. The Cysteine switch signature appears at 118-125 (PRCGNPDV). Cysteine 120 is a Zn(2+) binding site. Asparagine 127, asparagine 143, and asparagine 203 each carry an N-linked (GlcNAc...) asparagine glycan. Histidine 280 is a Zn(2+) binding site. Glutamate 281 is an active-site residue. The Zn(2+) site is built by histidine 284 and histidine 290. Asparagine 330 is a glycosylation site (N-linked (GlcNAc...) asparagine). The GPI-anchor amidated serine moiety is linked to residue serine 349. The propeptide at 350 to 378 (AAWRIDGSSRSTIVSLLLSTVGLVLWFLP) is removed in mature form.

This sequence belongs to the peptidase M10A family. Matrix metalloproteinases (MMPs) subfamily. The cofactor is Zn(2+). As to expression, mostly expressed in roots, and, to a lower extent, in flowers, leaves and stems.

Its subcellular location is the cell membrane. Its activity is regulated as follows. Repressed by acetohydroxamic acid (AHA). Functionally, matrix metalloproteinases (MMPs) or matrixins may play a role in the degradation and remodeling of the extracellular matrix (ECM) during development or in response to stresses. Required for plant growth, morphogenesis, and development with particular relevance for flowering and senescence. Active on McaPLGLDpaAR-NH(2) (QF24) and myelin basic protein (MBP) and, to some extent, on beta-casein. The polypeptide is Metalloendoproteinase 2-MMP (Arabidopsis thaliana (Mouse-ear cress)).